A 303-amino-acid chain; its full sequence is UDP-N-acetylenolpyruvoylglucosamine reductase (303 aa).

The region spanning 29–196 (KIGGPADVLV…LEAVLQLEQK (168 aa)) is the FAD-binding PCMH-type domain. The active site involves R174. The active-site Proton donor is the S225. E295 is an active-site residue.

This sequence belongs to the MurB family. The cofactor is FAD.

It localises to the cytoplasm. It carries out the reaction UDP-N-acetyl-alpha-D-muramate + NADP(+) = UDP-N-acetyl-3-O-(1-carboxyvinyl)-alpha-D-glucosamine + NADPH + H(+). It participates in cell wall biogenesis; peptidoglycan biosynthesis. Its function is as follows. Cell wall formation. This Bacillus subtilis (strain 168) protein is UDP-N-acetylenolpyruvoylglucosamine reductase (murB).